Here is a 249-residue protein sequence, read N- to C-terminus: Triosephosphate isomerase (249 aa).

2 residues coordinate substrate: Asn-12 and Lys-14. Lys-14 carries the N6-acetyllysine modification. Residue Tyr-68 is modified to 3'-nitrotyrosine. Ser-80 carries the post-translational modification Phosphoserine. Catalysis depends on His-96, which acts as the Electrophile. Ser-106 is modified (phosphoserine). Lys-142 is covalently cross-linked (Glycyl lysine isopeptide (Lys-Gly) (interchain with G-Cter in SUMO1)). Lys-149 is subject to N6-succinyllysine. Lys-156 is modified (N6-acetyllysine; alternate). At Lys-156 the chain carries N6-succinyllysine; alternate. Phosphoserine is present on Ser-159. The active-site Proton acceptor is the Glu-166. Thr-173 is modified (phosphothreonine). Residue Lys-194 is modified to N6-acetyllysine; alternate. Lys-194 is subject to N6-succinyllysine; alternate. Lys-194 is subject to N6-methyllysine; alternate. Ser-198 carries the post-translational modification Phosphoserine. A 3'-nitrotyrosine modification is found at Tyr-209. Ser-212 carries the post-translational modification Phosphoserine. A Phosphothreonine modification is found at Thr-214. Residue Ser-223 is modified to Phosphoserine. At Lys-238 the chain carries N6-acetyllysine.

It belongs to the triosephosphate isomerase family. Homodimer.

The protein resides in the cytoplasm. The catalysed reaction is dihydroxyacetone phosphate = methylglyoxal + phosphate. It carries out the reaction D-glyceraldehyde 3-phosphate = dihydroxyacetone phosphate. It participates in carbohydrate degradation; glycolysis; D-glyceraldehyde 3-phosphate from glycerone phosphate: step 1/1. The protein operates within carbohydrate biosynthesis; gluconeogenesis. Functionally, triosephosphate isomerase is an extremely efficient metabolic enzyme that catalyzes the interconversion between dihydroxyacetone phosphate (DHAP) and D-glyceraldehyde-3-phosphate (G3P) in glycolysis and gluconeogenesis. It is also responsible for the non-negligible production of methylglyoxal a reactive cytotoxic side-product that modifies and can alter proteins, DNA and lipids. The protein is Triosephosphate isomerase (TPI1) of Pongo abelii (Sumatran orangutan).